The sequence spans 380 residues: Succinyl-diaminopimelate desuccinylase (380 aa).

Histidine 70 serves as a coordination point for Zn(2+). Aspartate 72 is a catalytic residue. Aspartate 104 serves as a coordination point for Zn(2+). Catalysis depends on glutamate 138, which acts as the Proton acceptor. Residues glutamate 139, glutamate 167, and histidine 353 each coordinate Zn(2+).

This sequence belongs to the peptidase M20A family. DapE subfamily. In terms of assembly, homodimer. Zn(2+) serves as cofactor. Co(2+) is required as a cofactor.

It catalyses the reaction N-succinyl-(2S,6S)-2,6-diaminopimelate + H2O = (2S,6S)-2,6-diaminopimelate + succinate. Its pathway is amino-acid biosynthesis; L-lysine biosynthesis via DAP pathway; LL-2,6-diaminopimelate from (S)-tetrahydrodipicolinate (succinylase route): step 3/3. Its function is as follows. Catalyzes the hydrolysis of N-succinyl-L,L-diaminopimelic acid (SDAP), forming succinate and LL-2,6-diaminopimelate (DAP), an intermediate involved in the bacterial biosynthesis of lysine and meso-diaminopimelic acid, an essential component of bacterial cell walls. The polypeptide is Succinyl-diaminopimelate desuccinylase (Ectopseudomonas mendocina (strain ymp) (Pseudomonas mendocina)).